Reading from the N-terminus, the 601-residue chain is MEGSDFLLAGVLFLFAAVAAVPLASRLGIGAVLGYLLAGIAIGPWGLGFISDVDEILHFSELGVVFLMFIIGLELNPSKLWQLRRSIFGVGAAQVLLSAALLAGLLMLTDFAWQAAVVGGIGLAMSSTAMALQLMREKGMNRSESGQLGFSVLLFQDLAVIPALALVPLLAGSADEHFDWMKIGMKVLAFVGMLIGGRYLLRPVFRFIAASGVREVFTAATLLLVLGSALFMDALGLSMALGTFIAGVLLAESEYRHELETAIDPFKGLLLGLFFISVGMSLNLGVLYIHLLWVVISVVVLVAVKILVLYLLARLYGVRSSERMQFAGVLSQGGEFAFVLFSTASSQRLFQGDQMALLLVTVTLSMMTTPLLMKLVDKWLSRQFNGPEEEDEKPWVNDDKPQVIVVGFGRFGQVIGRLLMANKMRITVLERDISAVNLMRKYGYKVYYGDATQVDLLRSAGAEAAESIVITCNEPEDTMKLVEICQQHFPHLHILARARGRVEAHELLQAGVTQFSRETFSSALELGRKTLVTLGMHPHQAQRAQLHFRRLDMRMLRELIPMHADTVQISRAREARRELEEIFQREMQQERRQLDGWDEFE.

13 helical membrane-spanning segments follow: residues 4-24 (SDFL…VPLA), 29-49 (IGAV…GLGF), 55-75 (EILH…GLEL), 87-107 (IFGV…GLLM), 115-135 (AAVV…LQLM), 152-172 (VLLF…LLAG), 177-197 (HFDW…LIGG), 207-227 (FIAA…LVLG), 230-250 (LFMD…GVLL), 262-282 (AIDP…GMSL), 284-304 (LGVL…LVAV), 324-344 (MQFA…FSTA), and 356-376 (ALLL…MKLV). The RCK N-terminal domain maps to 400 to 519 (KPQVIVVGFG…AGVTQFSRET (120 aa)).

This sequence belongs to the monovalent cation:proton antiporter 2 (CPA2) transporter (TC 2.A.37) family. KefB subfamily. In terms of assembly, interacts with the regulatory subunit KefG.

Its subcellular location is the cell inner membrane. Functionally, pore-forming subunit of a potassium efflux system that confers protection against electrophiles. Catalyzes K(+)/H(+) antiport. This Shigella boydii serotype 18 (strain CDC 3083-94 / BS512) protein is Glutathione-regulated potassium-efflux system protein KefB.